The primary structure comprises 776 residues: DNA ligase (776 aa).

Residues 31-35, 80-81, and Glu112 contribute to the NAD(+) site; these read DAEYD and SL. The N6-AMP-lysine intermediate role is filled by Lys114. NAD(+)-binding residues include Arg135, Glu172, Lys288, and Lys312. Cys406, Cys409, Cys436, and Cys442 together coordinate Zn(2+). Positions 693–776 constitute a BRCT domain; the sequence is AEGLPLAGQT…VFLDEQGIAI (84 aa).

This sequence belongs to the NAD-dependent DNA ligase family. LigA subfamily. Mg(2+) serves as cofactor. Requires Mn(2+) as cofactor.

It catalyses the reaction NAD(+) + (deoxyribonucleotide)n-3'-hydroxyl + 5'-phospho-(deoxyribonucleotide)m = (deoxyribonucleotide)n+m + AMP + beta-nicotinamide D-nucleotide.. Its function is as follows. DNA ligase that catalyzes the formation of phosphodiester linkages between 5'-phosphoryl and 3'-hydroxyl groups in double-stranded DNA using NAD as a coenzyme and as the energy source for the reaction. It is essential for DNA replication and repair of damaged DNA. This chain is DNA ligase, found in Pseudomonas putida (strain W619).